Consider the following 474-residue polypeptide: L-arabinose isomerase (474 aa).

Residues Glu306, Glu331, His348, and His447 each contribute to the Mn(2+) site.

This sequence belongs to the arabinose isomerase family. Mn(2+) serves as cofactor.

It catalyses the reaction beta-L-arabinopyranose = L-ribulose. Its pathway is carbohydrate degradation; L-arabinose degradation via L-ribulose; D-xylulose 5-phosphate from L-arabinose (bacterial route): step 1/3. In terms of biological role, catalyzes the conversion of L-arabinose to L-ribulose. The sequence is that of L-arabinose isomerase from Oceanobacillus iheyensis (strain DSM 14371 / CIP 107618 / JCM 11309 / KCTC 3954 / HTE831).